A 299-amino-acid chain; its full sequence is tRNA dimethylallyltransferase (299 aa).

11-18 lines the ATP pocket; the sequence is GPTAVGKT. 13-18 is a substrate binding site; that stretch reads TAVGKT. Positions 36–39 are interaction with substrate tRNA; sequence DSQQ.

The protein belongs to the IPP transferase family. In terms of assembly, monomer. It depends on Mg(2+) as a cofactor.

It carries out the reaction adenosine(37) in tRNA + dimethylallyl diphosphate = N(6)-dimethylallyladenosine(37) in tRNA + diphosphate. In terms of biological role, catalyzes the transfer of a dimethylallyl group onto the adenine at position 37 in tRNAs that read codons beginning with uridine, leading to the formation of N6-(dimethylallyl)adenosine (i(6)A). This Streptococcus pyogenes serotype M28 (strain MGAS6180) protein is tRNA dimethylallyltransferase.